The chain runs to 360 residues: Phospho-N-acetylmuramoyl-pentapeptide-transferase (360 aa).

Transmembrane regions (helical) follow at residues 21–41 (YVTFRAILGLMTALVFCLWWG), 74–94 (MGGILILAGIFISVLLWGDLG), 97–117 (YVWVVLFVLASFGLIGFIDDY), 135–155 (ILQSLAAIIIAFYLYASADTV), 168–188 (IMPQMGAFFIVLAYFTIVGSS), 199–219 (GLAIMPTVMVAAAFALIAYLS), 236–256 (AGELVIVCTAIVGAGLGFLWF), 263–283 (VFMGDVGSLALGAALGAIAVL), 288–308 (ILLVIMGGVFVMETVSVILQV), and 338–358 (VIVRFWIISLFLVMLGLATLK).

Belongs to the glycosyltransferase 4 family. MraY subfamily. Mg(2+) is required as a cofactor.

The protein localises to the cell inner membrane. It catalyses the reaction UDP-N-acetyl-alpha-D-muramoyl-L-alanyl-gamma-D-glutamyl-meso-2,6-diaminopimeloyl-D-alanyl-D-alanine + di-trans,octa-cis-undecaprenyl phosphate = di-trans,octa-cis-undecaprenyl diphospho-N-acetyl-alpha-D-muramoyl-L-alanyl-D-glutamyl-meso-2,6-diaminopimeloyl-D-alanyl-D-alanine + UMP. It functions in the pathway cell wall biogenesis; peptidoglycan biosynthesis. In terms of biological role, catalyzes the initial step of the lipid cycle reactions in the biosynthesis of the cell wall peptidoglycan: transfers peptidoglycan precursor phospho-MurNAc-pentapeptide from UDP-MurNAc-pentapeptide onto the lipid carrier undecaprenyl phosphate, yielding undecaprenyl-pyrophosphoryl-MurNAc-pentapeptide, known as lipid I. The polypeptide is Phospho-N-acetylmuramoyl-pentapeptide-transferase (Shewanella violacea (strain JCM 10179 / CIP 106290 / LMG 19151 / DSS12)).